Here is a 309-residue protein sequence, read N- to C-terminus: Ribosomal RNA small subunit methyltransferase H (309 aa).

Residues 44-46, D62, F102, D118, and Q125 contribute to the S-adenosyl-L-methionine site; that span reads GGH. Residues 289-309 are disordered; it reads LEQQRNSRARSAKLRVAARSS.

The protein belongs to the methyltransferase superfamily. RsmH family.

It is found in the cytoplasm. It carries out the reaction cytidine(1402) in 16S rRNA + S-adenosyl-L-methionine = N(4)-methylcytidine(1402) in 16S rRNA + S-adenosyl-L-homocysteine + H(+). Functionally, specifically methylates the N4 position of cytidine in position 1402 (C1402) of 16S rRNA. The sequence is that of Ribosomal RNA small subunit methyltransferase H from Synechococcus sp. (strain JA-3-3Ab) (Cyanobacteria bacterium Yellowstone A-Prime).